Consider the following 181-residue polypeptide: ECF RNA polymerase sigma factor RpoE (181 aa).

A sigma-70 factor domain-2 region spans residues 29 to 96 (LFQHFAPKVK…RRIDGLRKDR (68 aa)). The Interaction with polymerase core subunit RpoC signature appears at 53–56 (ECAQ). Residues 129-178 (AIARLPEAQRALIERAFFGDLTHRELAAETGLPLGTIKSRIRLALDRLRQ) are sigma-70 factor domain-4. Positions 151–170 (HRELAAETGLPLGTIKSRIR) form a DNA-binding region, H-T-H motif.

It belongs to the sigma-70 factor family. ECF subfamily. As to quaternary structure, interacts transiently with the RNA polymerase catalytic core formed by RpoA, RpoB, RpoC and RpoZ (2 alpha, 1 beta, 1 beta' and 1 omega subunit) to form the RNA polymerase holoenzyme that can initiate transcription. Forms a 1:1 complex (via sigma-70 factor domain 4) with anti-sigma factor ChrR; this inhibits the interaction of RpoE with the RNA polymerase catalytic core.

In terms of biological role, sigma factors are initiation factors that promote the attachment of RNA polymerase to specific initiation sites and are then released. Extracytoplasmic function (ECF) sigma factors are held in an inactive form by a cognate anti-sigma factor until released. Sigma-E controls a transcriptional response to singlet oxygen, a by-product of photosynthesis; its continuous activity requires constant exposure to singlet oxygen. The regulon has about 180 genes that protect against or repair damage induced by singlet oxygen, including itself and rpoH2, a heat shock-responsive sigma factor. This is ECF RNA polymerase sigma factor RpoE (rpoE) from Cereibacter sphaeroides (strain ATCC 17023 / DSM 158 / JCM 6121 / CCUG 31486 / LMG 2827 / NBRC 12203 / NCIMB 8253 / ATH 2.4.1.) (Rhodobacter sphaeroides).